The primary structure comprises 510 residues: Abscisic acid 8'-hydroxylase 2 (510 aa).

A helical membrane pass occupies residues 3–23 (FLLFFVFVTAAVLCFVVPAFL). Heme is bound at residue Cys441.

It belongs to the cytochrome P450 family. Heme serves as cofactor.

It is found in the membrane. It catalyses the reaction 2-cis-(+)-abscisate + reduced [NADPH--hemoprotein reductase] + O2 = (+)-8'-hydroxyabscisate + oxidized [NADPH--hemoprotein reductase] + H2O + H(+). The protein operates within plant hormone degradation; abscisic acid degradation. Involved in the oxidative degradation of abscisic acid. This Oryza sativa subsp. japonica (Rice) protein is Abscisic acid 8'-hydroxylase 2 (CYP707A6).